A 1035-amino-acid polypeptide reads, in one-letter code: Kinesin-like protein KIN-4A (1035 aa).

The Kinesin motor domain maps to 11-370; that stretch reads SVKVAVHIRP…LKYANRARNI (360 aa). 90 to 97 serves as a coordination point for ATP; sequence GQTGSGKT. Coiled-coil stretches lie at residues 408–436, 504–707, and 881–911; these read CAEV…HEYR, QNSM…RKSS, and KEIV…IATS. Positions 704-724 are disordered; that stretch reads RKSSPREHSAGTNGFGTNGQT.

This sequence belongs to the TRAFAC class myosin-kinesin ATPase superfamily. Kinesin family. KIN-4 subfamily. In terms of assembly, homodimer. As to expression, expressed in stems and flowers. Detected in cells undergoing secondary wall deposition including developing interfascicular fibers and xylem cells, but also in dividing cells and expanding/elongating parenchyma cells.

It is found in the cytoplasm. Its subcellular location is the cytoskeleton. Kinesin-like motor protein involved in the control of the oriented deposition of cellulose microfibrils. Its motor activity is directed toward the microtubule's plus end. It possesses the potential to drive long-distance transport of cargo along cortical microtubules. Regulates cell wall mechanics during cell elongation, by the regulation of primary and secondary walls deposition. Contributes to cortical microtubule-mediated trafficking of cell wall components. This is Kinesin-like protein KIN-4A from Arabidopsis thaliana (Mouse-ear cress).